Here is a 501-residue protein sequence, read N- to C-terminus: Glycogenin-2 (501 aa).

UDP-binding residues include Leu-42, Thr-44, Asn-45, Tyr-48, and Arg-110. Leu-42, Thr-44, Asn-45, Tyr-48, Arg-110, Lys-119, Asp-135, Ala-136, Asp-137, Asn-166, Ser-167, Asp-193, Asp-196, and Gln-197 together coordinate UDP-alpha-D-glucose. The UDP site is built by Asp-135, Ala-136, and Asp-137. A Mn(2+)-binding site is contributed by Asp-135. Asp-137 provides a ligand contact to Mn(2+). O-linked (Glc...) tyrosine glycosylation is present at Tyr-228. UDP-binding residues include His-245, Gly-248, and Lys-251. His-245 provides a ligand contact to Mn(2+). UDP-alpha-D-glucose is bound by residues Gly-248 and Lys-251. Residues Ser-368, Ser-399, and Ser-459 each carry the phosphoserine modification.

As to quaternary structure, homodimer, tightly complexed to glycogen synthase. Mn(2+) serves as cofactor. Post-translationally, self-glycosylated by the transfer of glucose residues from UDP-glucose to itself, forming an alpha-1,4-glycan of around 10 residues attached to Tyr-228. As to expression, detected in liver (at protein level). Expressed preferentially in liver, heart, and pancreas.

Its subcellular location is the cytoplasm. The protein resides in the nucleus. It catalyses the reaction L-tyrosyl-[glycogenin] + UDP-alpha-D-glucose = alpha-D-glucosyl-L-tyrosyl-[glycogenin] + UDP + H(+). It carries out the reaction [1,4-alpha-D-glucosyl](n)-L-tyrosyl-[glycogenin] + UDP-alpha-D-glucose = [1,4-alpha-D-glucosyl](n+1)-L-tyrosyl-[glycogenin] + UDP + H(+). Its pathway is glycan biosynthesis; glycogen biosynthesis. Functionally, glycogenin participates in the glycogen biosynthetic process along with glycogen synthase and glycogen branching enzyme. It catalyzes the formation of a short alpha (1,4)-glucosyl chain covalently attached via a glucose 1-O-tyrosyl linkage to internal tyrosine residues and these chains act as primers for the elongation reaction catalyzed by glycogen synthase. The sequence is that of Glycogenin-2 (GYG2) from Homo sapiens (Human).